The following is a 152-amino-acid chain: Interleukin-2 (152 aa).

A signal peptide spans 1-20 (MYRMQLLSCIALTLALVANG). An O-linked (GalNAc...) threonine glycan is attached at Thr23. Cys78 and Cys126 are joined by a disulfide.

The protein belongs to the IL-2 family.

It is found in the secreted. Cytokine produced by activated CD4-positive helper T-cells and to a lesser extend activated CD8-positive T-cells and natural killer (NK) cells that plays pivotal roles in the immune response and tolerance. Binds to a receptor complex composed of either the high-affinity trimeric IL-2R (IL2RA/CD25, IL2RB/CD122 and IL2RG/CD132) or the low-affinity dimeric IL-2R (IL2RB and IL2RG). Interaction with the receptor leads to oligomerization and conformation changes in the IL-2R subunits resulting in downstream signaling starting with phosphorylation of JAK1 and JAK3. In turn, JAK1 and JAK3 phosphorylate the receptor to form a docking site leading to the phosphorylation of several substrates including STAT5. This process leads to activation of several pathways including STAT, phosphoinositide-3-kinase/PI3K and mitogen-activated protein kinase/MAPK pathways. Functions as a T-cell growth factor and can increase NK-cell cytolytic activity as well. Promotes strong proliferation of activated B-cells and subsequently immunoglobulin production. Plays a pivotal role in regulating the adaptive immune system by controlling the survival and proliferation of regulatory T-cells, which are required for the maintenance of immune tolerance. Moreover, participates in the differentiation and homeostasis of effector T-cell subsets, including Th1, Th2, Th17 as well as memory CD8-positive T-cells. The polypeptide is Interleukin-2 (IL2) (Orcinus orca (Killer whale)).